A 321-amino-acid chain; its full sequence is Probable arabinan endo-1,5-alpha-L-arabinosidase C (321 aa).

The N-terminal stretch at 1 to 20 (MYLYTLILLFLASVNVNAYA) is a signal peptide. The Proton acceptor role is filled by aspartate 33. 2 N-linked (GlcNAc...) asparagine glycosylation sites follow: asparagine 75 and asparagine 192. Glutamate 200 functions as the Proton donor in the catalytic mechanism. Asparagine 224 carries an N-linked (GlcNAc...) asparagine glycan.

It belongs to the glycosyl hydrolase 43 family.

The protein resides in the secreted. The enzyme catalyses Endohydrolysis of (1-&gt;5)-alpha-arabinofuranosidic linkages in (1-&gt;5)-arabinans.. Its pathway is glycan metabolism; L-arabinan degradation. In terms of biological role, endo-1,5-alpha-L-arabinanase involved in degradation of pectin. Its preferred substrate is linear 1,5-alpha-L-arabinan. This Neosartorya fischeri (strain ATCC 1020 / DSM 3700 / CBS 544.65 / FGSC A1164 / JCM 1740 / NRRL 181 / WB 181) (Aspergillus fischerianus) protein is Probable arabinan endo-1,5-alpha-L-arabinosidase C (abnC).